Here is a 109-residue protein sequence, read N- to C-terminus: Mitochondrial pyruvate carrier 2 (109 aa).

3 helical membrane-spanning segments follow: residues 19–35 (IHFW…IANI), 51–67 (IAVT…STII), and 74–90 (LFSV…YQLT).

The protein belongs to the mitochondrial pyruvate carrier (MPC) (TC 2.A.105) family.

It is found in the mitochondrion inner membrane. Its function is as follows. Mediates the uptake of pyruvate into mitochondria. In Arabidopsis thaliana (Mouse-ear cress), this protein is Mitochondrial pyruvate carrier 2.